A 760-amino-acid chain; its full sequence is Exostosin-1 (760 aa).

Topologically, residues 1–6 are cytoplasmic; that stretch reads MQAKKR. Residues 7-25 traverse the membrane as a helical; Signal-anchor for type II membrane protein segment; that stretch reads YILVFVSCAFLAYAYFGGY. The Lumenal portion of the chain corresponds to 26–760; that stretch reads RLKVSPLRPR…KYRQIELVGS (735 aa). N-linked (GlcNAc...) asparagine glycosylation is found at Asn71 and Asn327. A UDP-N-acetyl-alpha-D-glucosamine-binding site is contributed by Arg437. N-linked (GlcNAc...) asparagine glycosylation occurs at Asn476. The interval 540-560 is disordered; sequence LGGSTRSQGAGPTSQTTEGRP. Over residues 541-560 the composition is skewed to polar residues; that stretch reads GGSTRSQGAGPTSQTTEGRP. UDP-N-acetyl-alpha-D-glucosamine-binding residues include Arg565, Asp581, Glu582, Asp583, Glu669, Asp670, and Arg713. Asp583 lines the Mn(2+) pocket. Cys668 and Cys716 are disulfide-bonded. Residue Asp670 is part of the active site.

It belongs to the glycosyltransferase 47 family. In terms of assembly, interacts with sau. Mn(2+) is required as a cofactor. Ubiquitously expressed in early embryos. Later (in stage 10 embryos), it is expressed at higher level in the nervous system. Ubiquitously expressed in wing imaginal disk.

It localises to the endoplasmic reticulum membrane. The protein resides in the golgi apparatus membrane. It catalyses the reaction 3-O-{[(1-&gt;4)-beta-D-GlcA-(1-&gt;4)-alpha-D-GlcNAc](n)-(1-&gt;4)-beta-D-GlcA-(1-&gt;3)-beta-D-Gal-(1-&gt;3)-beta-D-Gal-(1-&gt;4)-beta-D-Xyl}-L-seryl-[protein] + UDP-N-acetyl-alpha-D-glucosamine = 3-O-{alpha-D-GlcNAc-[(1-&gt;4)-beta-D-GlcA-(1-&gt;4)-alpha-D-GlcNAc](n)-(1-&gt;4)-beta-D-GlcA-(1-&gt;3)-beta-D-Gal-(1-&gt;3)-beta-D-Gal-(1-&gt;4)-beta-D-Xyl}-L-seryl-[protein] + UDP + H(+). It carries out the reaction 3-O-{alpha-D-GlcNAc-[(1-&gt;4)-beta-D-GlcA-(1-&gt;4)-alpha-D-GlcNAc](n)-(1-&gt;4)-beta-D-GlcA-(1-&gt;3)-beta-D-Gal-(1-&gt;3)-beta-D-Gal-(1-&gt;4)-beta-D-Xyl}-L-seryl-[protein] + UDP-alpha-D-glucuronate = 3-O-{[(1-&gt;4)-beta-D-GlcA-(1-&gt;4)-alpha-D-GlcNAc](n+1)-(1-&gt;4)-beta-D-GlcA-(1-&gt;3)-beta-D-Gal-(1-&gt;3)-beta-D-Gal-(1-&gt;4)-beta-D-Xyl}-L-seryl-[protein] + UDP + H(+). It functions in the pathway protein modification; protein glycosylation. Its pathway is glycan metabolism; heparan sulfate biosynthesis. The protein operates within glycan metabolism; heparin biosynthesis. Its function is as follows. Glycosyltransferase required for the biosynthesis of heparan-sulfate and responsible for the alternating addition of beta-1-4-linked glucuronic acid (GlcA) and alpha-1-4-linked N-acetylglucosamine (GlcNAc) units to nascent heparan sulfate chains. Botv is the trigger of heparan sulfate chain initiation and polymerization takes place by a complex of ttv and sotv. Plays a central role in the diffusion of morphogens hedgehog (hh), wingless (wg) and decapentaplegic (dpp) via its role in heparan sulfate proteoglycans (HSPGs) biosynthesis which are required for movement of hh, dpp and wg morphogens. In Drosophila melanogaster (Fruit fly), this protein is Exostosin-1 (ttv).